The chain runs to 668 residues: Tyrosine-protein phosphatase non-receptor type ptp-2 (668 aa).

2 consecutive SH2 domains span residues 10-113 (NFYY…KKPV) and 134-232 (WWHG…EEPL). The 317-residue stretch at 264–580 (ISEEFDRLSQ…QFLYKALAFY (317 aa)) folds into the Tyrosine-protein phosphatase domain. Cys-518 functions as the Phosphocysteine intermediate in the catalytic mechanism. The disordered stretch occupies residues 603–668 (PRRLRPTPNA…SSTLLKSTKK (66 aa)). 2 stretches are compositionally biased toward low complexity: residues 616 to 634 (SSARQVTSSRPSSSASSRT) and 652 to 668 (STSSTSSSSTLLKSTKK).

It belongs to the protein-tyrosine phosphatase family. Non-receptor class 2 subfamily. In terms of tissue distribution, expressed in embryonic cells, developing vulva, body wall muscles, head neurons and gonadal sheath cells.

Its subcellular location is the cytoplasm. The catalysed reaction is O-phospho-L-tyrosyl-[protein] + H2O = L-tyrosyl-[protein] + phosphate. Its function is as follows. Involved in embryonic and larval development. Plays a role in oogenesis by regulating mpk-1 phosphorylation and oocyte maturation in response to major sperm protein (MSP). During the formation of neuromuscular junctions at the larval stage, negatively regulates membrane protrusion from body wall muscles probably downstream of receptor egl-15. Plays a role in fluid homeostasis probably downstream of receptor egl-15 and adapter soc-1. Promotes vulva induction and negatively regulates fertility probably downstream of receptor let-23. Negatively regulates daf-2-mediated repression of dauer formation. In Caenorhabditis elegans, this protein is Tyrosine-protein phosphatase non-receptor type ptp-2.